Reading from the N-terminus, the 141-residue chain is Large-conductance mechanosensitive channel (141 aa).

A run of 3 helical transmembrane segments spans residues 8-28 (FALK…AAFG), 38-58 (IIMP…FFPL), and 80-100 (GNFL…FLIV).

This sequence belongs to the MscL family. In terms of assembly, homopentamer.

Its subcellular location is the cell inner membrane. Functionally, channel that opens in response to stretch forces in the membrane lipid bilayer. May participate in the regulation of osmotic pressure changes within the cell. This chain is Large-conductance mechanosensitive channel, found in Beijerinckia indica subsp. indica (strain ATCC 9039 / DSM 1715 / NCIMB 8712).